We begin with the raw amino-acid sequence, 186 residues long: Intraflagellar transport protein 27 homolog (186 aa).

GTP-binding positions include 12-19 (GDPTVGKT), 64-68 (DSAGK), and 123-126 (NKTD).

It belongs to the small GTPase superfamily. Rab family. As to quaternary structure, component of the IFT complex B, at least composed of IFT20, IFT22, IFT25, IFT27, IFT46, IFT52, TRAF3IP1/IFT54, IFT57, IFT74, IFT80, IFT81, and IFT88. Interacts with IFT25. Interacts with IFT70B. Interacts with RABL2/RABL2A; binding is equal in the presence of GTP or GDP. Interacts with IFT88. Interacts with ARL6; recognizes and binds with the GTP-free form of ARL6.

Its subcellular location is the cell projection. It is found in the cilium. The protein resides in the cytoplasm. It localises to the flagellum. Small GTPase-like component of the intraflagellar transport (IFT) complex B that promotes the exit of the BBSome complex from cilia via its interaction with ARL6. Not involved in entry of the BBSome complex into cilium. Prevents aggregation of GTP-free ARL6. Required for hedgehog signaling. Forms a subcomplex within the IFT complex B with IFT25. Its role in intraflagellar transport is mainly seen in tissues rich in ciliated cells such as kidney and testis. Essential for male fertility, spermiogenesis and sperm flagella formation. Plays a role in the early development of the kidney. May be involved in the regulation of ureteric bud initiation. This chain is Intraflagellar transport protein 27 homolog (IFT27), found in Bos taurus (Bovine).